Consider the following 71-residue polypeptide: Conotoxin ba5b (71 aa).

An N-terminal signal peptide occupies residues 1-19 (MLCLPVFITLLLLVSPSAA). The propeptide occupies 20-52 (LPVESELQRDLTQDSPKDFRIREPLLLSKMFDR). Cystine bridges form between Cys54-Cys63 and Cys55-Cys64. Position 64 is a cysteine amide (Cys64). Positions 66–71 (RYQRGS) are excised as a propeptide.

Belongs to the conotoxin T superfamily. Expressed by the venom duct.

It is found in the secreted. In Conus bayani (Bayan's cone), this protein is Conotoxin ba5b.